Reading from the N-terminus, the 614-residue chain is tRNA uridine 5-carboxymethylaminomethyl modification enzyme MnmG (614 aa).

Glycine 10–glycine 15 contacts FAD. NAD(+) is bound at residue glycine 271–phenylalanine 285.

Belongs to the MnmG family. Homodimer. Heterotetramer of two MnmE and two MnmG subunits. Requires FAD as cofactor.

It is found in the cytoplasm. Functionally, NAD-binding protein involved in the addition of a carboxymethylaminomethyl (cmnm) group at the wobble position (U34) of certain tRNAs, forming tRNA-cmnm(5)s(2)U34. The chain is tRNA uridine 5-carboxymethylaminomethyl modification enzyme MnmG from Ureaplasma urealyticum serovar 10 (strain ATCC 33699 / Western).